The following is a 487-amino-acid chain: Glycogen synthase (487 aa).

Residue lysine 20 coordinates ADP-alpha-D-glucose.

This sequence belongs to the glycosyltransferase 1 family. Bacterial/plant glycogen synthase subfamily.

It catalyses the reaction [(1-&gt;4)-alpha-D-glucosyl](n) + ADP-alpha-D-glucose = [(1-&gt;4)-alpha-D-glucosyl](n+1) + ADP + H(+). The protein operates within glycan biosynthesis; glycogen biosynthesis. Functionally, synthesizes alpha-1,4-glucan chains using ADP-glucose. This chain is Glycogen synthase, found in Aliivibrio fischeri (strain ATCC 700601 / ES114) (Vibrio fischeri).